Reading from the N-terminus, the 202-residue chain is Orotate phosphoribosyltransferase (202 aa).

5-phospho-alpha-D-ribose 1-diphosphate contacts are provided by residues K93 and 113–121 (EDIITTGGS). Residues T117 and R145 each contribute to the orotate site.

The protein belongs to the purine/pyrimidine phosphoribosyltransferase family. PyrE subfamily. As to quaternary structure, homodimer. Mg(2+) is required as a cofactor.

It catalyses the reaction orotidine 5'-phosphate + diphosphate = orotate + 5-phospho-alpha-D-ribose 1-diphosphate. The protein operates within pyrimidine metabolism; UMP biosynthesis via de novo pathway; UMP from orotate: step 1/2. In terms of biological role, catalyzes the transfer of a ribosyl phosphate group from 5-phosphoribose 1-diphosphate to orotate, leading to the formation of orotidine monophosphate (OMP). The polypeptide is Orotate phosphoribosyltransferase (Campylobacter curvus (strain 525.92)).